Reading from the N-terminus, the 334-residue chain is HTH-type transcriptional repressor PurR (334 aa).

The HTH lacI-type domain occupies 2–56; it reads ATIKDVARMAGVSTTTVSHVINKTRFVAEATQKKVLAAVDDLNYAPSAVARSLKC. The segment at residues 4–23 is a DNA-binding region (H-T-H motif); the sequence is IKDVARMAGVSTTTVSHVIN. Residues 48 to 56 mediate DNA binding; sequence SAVARSLKC. The hypoxanthine site is built by Phe-73, Lys-189, Thr-191, Phe-220, and Asp-274.

In terms of assembly, homodimer.

Its pathway is purine metabolism; purine nucleotide biosynthesis [regulation]. Functionally, is the main repressor of the genes involved in the de novo synthesis of purine nucleotides, regulating purB, purC, purEK, purF, purHD, purL, purMN and guaBA expression. PurR is allosterically activated to bind its cognate DNA by binding the purine corepressors, hypoxanthine or guanine, thereby effecting transcription repression. In Photobacterium profundum (strain SS9), this protein is HTH-type transcriptional repressor PurR.